The primary structure comprises 573 residues: Protein FAM200A (573 aa).

The tract at residues 1-51 (MTPESRDTTDLSPRGTQEMEGIVVVKVEEEDEEDHFQKQRNKVESSPQVLS) is disordered. Residues 1 to 513 (MTPESRDTTD…DEFPLLSRKS (513 aa)) lie on the Extracellular side of the membrane. A helical membrane pass occupies residues 514 to 533 (ISLLLPFTTTYLCELGFSIL). Over 534-573 (TRLKTKKRNRLNSAPDMRVALSSCVPDWKELMNRQAHPSH) the chain is Cytoplasmic.

Belongs to the FAM200 family.

Its subcellular location is the membrane. The chain is Protein FAM200A (FAM200A) from Macaca fascicularis (Crab-eating macaque).